The chain runs to 577 residues: Arginine--tRNA ligase (577 aa).

The 'HIGH' region motif lies at 122-132; the sequence is PNVAKEMHVGH.

It belongs to the class-I aminoacyl-tRNA synthetase family. In terms of assembly, monomer.

The protein resides in the cytoplasm. The catalysed reaction is tRNA(Arg) + L-arginine + ATP = L-arginyl-tRNA(Arg) + AMP + diphosphate. The sequence is that of Arginine--tRNA ligase from Vibrio campbellii (strain ATCC BAA-1116).